We begin with the raw amino-acid sequence, 127 residues long: Large ribosomal subunit protein bL17 (127 aa).

It belongs to the bacterial ribosomal protein bL17 family. Part of the 50S ribosomal subunit. Contacts protein L32.

In Leuconostoc mesenteroides subsp. mesenteroides (strain ATCC 8293 / DSM 20343 / BCRC 11652 / CCM 1803 / JCM 6124 / NCDO 523 / NBRC 100496 / NCIMB 8023 / NCTC 12954 / NRRL B-1118 / 37Y), this protein is Large ribosomal subunit protein bL17.